Here is a 381-residue protein sequence, read N- to C-terminus: MKNISILGSTGSIGTQTLDVVRNHPEKFKIVALSASGNIDAIENQIHEFHPEIVAVFHREKAEILSARIGKKVKVVSGIEGLIEVATLDSADIVVTSVVGSIGLIPTVEAIRCGKTIALANKETLVVAGELIKKEAEKHKVQIIPVDSEHSAIFQCLQGEDIHNISRIILTASGGAFRNWEKQDIQHAKAQDALKHPTWNMGSKVTIDSASLMNKGLEVMEARWLFNVELDKIDVIVHPQSIVHSMVEYNDFSIIAQIGAPDMRGPIQYALSYPNRINSSIERLDFRKISALTFMAPDTDKFPCLSLAYESLKIGKTMPCVLNGANEVLVEYFLEDRIGFYDIPKFIEKAMSAHKPWVYTDIEELLEVDRWVRNWIKEQIE.

The NADPH site is built by T10, G11, S12, I13, N38, and N121. A 1-deoxy-D-xylulose 5-phosphate-binding site is contributed by K122. Position 123 (E123) interacts with NADPH. D147 is a binding site for Mn(2+). Positions 148, 149, 173, and 196 each coordinate 1-deoxy-D-xylulose 5-phosphate. E149 contacts Mn(2+). Position 202 (G202) interacts with NADPH. Residues S209, N214, K215, and E218 each contribute to the 1-deoxy-D-xylulose 5-phosphate site. E218 lines the Mn(2+) pocket.

This sequence belongs to the DXR family. Requires Mg(2+) as cofactor. Mn(2+) serves as cofactor.

The enzyme catalyses 2-C-methyl-D-erythritol 4-phosphate + NADP(+) = 1-deoxy-D-xylulose 5-phosphate + NADPH + H(+). It participates in isoprenoid biosynthesis; isopentenyl diphosphate biosynthesis via DXP pathway; isopentenyl diphosphate from 1-deoxy-D-xylulose 5-phosphate: step 1/6. Catalyzes the NADPH-dependent rearrangement and reduction of 1-deoxy-D-xylulose-5-phosphate (DXP) to 2-C-methyl-D-erythritol 4-phosphate (MEP). The sequence is that of 1-deoxy-D-xylulose 5-phosphate reductoisomerase from Alkaliphilus oremlandii (strain OhILAs) (Clostridium oremlandii (strain OhILAs)).